The chain runs to 272 residues: Probable protein VP2 (272 aa).

Disordered regions lie at residues 50-116 (GGSR…DFAD) and 195-272 (YSPA…SSSS). The span at 78–90 (APDPPAGNQPPAL) shows a compositional bias: pro residues. The span at 94–108 (GDGGNESGAGGGESG) shows a compositional bias: gly residues. The segment covering 218-230 (SKRDNKENRDRGR) has biased composition (basic and acidic residues). Residues 231 to 246 (AKARAKQKPKKRRRRA) are compositionally biased toward basic residues. The span at 249–272 (ESSSSSSSKSSFNSEEGSSASSSS) shows a compositional bias: low complexity.

Post-translationally, phosphorylated at C-terminal serines.

The protein is Probable protein VP2 of Homo sapiens (Human).